We begin with the raw amino-acid sequence, 201 residues long: Proteasome subunit beta type-2 (201 aa).

M1 is subject to N-acetylmethionine.

Belongs to the peptidase T1B family. In terms of assembly, the 26S proteasome consists of a 20S proteasome core and two 19S regulatory subunits. The 20S proteasome core is a barrel-shaped complex made of 28 subunits that are arranged in four stacked rings. The two outer rings are each formed by seven alpha subunits, and the two inner rings are formed by seven beta subunits. The proteolytic activity is exerted by three beta-subunits PSMB5, PSMB6 and PSMB7.

Its subcellular location is the cytoplasm. It localises to the nucleus. Non-catalytic component of the 20S core proteasome complex involved in the proteolytic degradation of most intracellular proteins. This complex plays numerous essential roles within the cell by associating with different regulatory particles. Associated with two 19S regulatory particles, forms the 26S proteasome and thus participates in the ATP-dependent degradation of ubiquitinated proteins. The 26S proteasome plays a key role in the maintenance of protein homeostasis by removing misfolded or damaged proteins that could impair cellular functions, and by removing proteins whose functions are no longer required. Associated with the PA200 or PA28, the 20S proteasome mediates ubiquitin-independent protein degradation. This type of proteolysis is required in several pathways including spermatogenesis (20S-PA200 complex) or generation of a subset of MHC class I-presented antigenic peptides (20S-PA28 complex). This Bos taurus (Bovine) protein is Proteasome subunit beta type-2 (PSMB2).